The following is a 223-amino-acid chain: MOB-like protein phocein (223 aa).

Zn(2+) is bound by residues Cys92, Cys97, Cys110, His113, Cys119, His127, His169, and His174.

This sequence belongs to the MOB1/phocein family. In terms of assembly, part of the core of STRIPAK complexes composed of PP2A catalytic and scaffolding subunits, the striatins (PP2A regulatory subunits), the striatin-associated proteins MOB4, STRIP1 and STRIP2, PDCD10 and members of the STE20 kinases, such as STK24 and STK26.

It is found in the cytoplasm. Its subcellular location is the membrane. The protein localises to the golgi apparatus. It localises to the golgi stack membrane. Part of the striatin-interacting phosphatase and kinase (STRIPAK) complexes. STRIPAK complexes have critical roles in protein (de)phosphorylation and are regulators of multiple signaling pathways including Hippo, MAPK, nuclear receptor and cytoskeleton remodeling. Different types of STRIPAK complexes are involved in a variety of biological processes such as cell growth, differentiation, apoptosis, metabolism and immune regulation. In Gallus gallus (Chicken), this protein is MOB-like protein phocein (MOB4).